The chain runs to 615 residues: MKALRLSASALFCLLLINGLGAAPPGRPEAQPPPLSSEHKEPVAGDAVPGPKDGSAPEVRGARNSEPQDEGELFQGVDPRALAAVLLQALDRPASPPAPSGSQQGPEEEAAEALLTETVRSQTHSLPAPESPEPAAPPRPQTPENGPEASDPSEELEALASLLQELRDFSPSSAKRQQETAAAETETRTHTLTRVNLESPGPERVWRASWGEFQARVPERAPLPPPAPSQFQARMPDSGPLPETHKFGEGVSSPKTHLGEALAPLSKAYQGVAAPFPKARRPESALLGGSEAGERLLQQGLAQVEAGRRQAEATRQAAAQEERLADLASDLLLQYLLQGGARQRGLGGRGLQEAAEERESAREEEEAEQERRGGEERVGEEDEEAAEAEAEAEEAERARQNALLFAEEEDGEAGAEDKRSQEETPGHRRKEAEGTEEGGEEEDDEEMDPQTIDSLIELSTKLHLPADDVVSIIEEVEEKRKRKKNAPPEPVPPPRAAPAPTHVRSPQPPPPAPAPARDELPDWNEVLPPWDREEDEVYPPGPYHPFPNYIRPRTLQPPSALRRRHYHHALPPSRHYPGREAQARRAQEEAEAEERRLQEQEELENYIEHVLLRRP.

A signal peptide spans 1–22 (MKALRLSASALFCLLLINGLGA). Disordered regions lie at residues 22–201 (AAPP…ESPG) and 218–257 (PERAPLPPPAPSQFQARMPDSGPLPETHKFGEGVSSPKTH). Pro residues-rich tracts occupy residues 25–35 (PGRPEAQPPPL) and 129–141 (PESPEPAAPPRPQ). Residues 179–194 (ETAAAETETRTHTLTR) show a composition bias toward low complexity. A Pyrrolidone carboxylic acid modification is found at Gln310. The interval 342–600 (RQRGLGGRGL…EAEERRLQEQ (259 aa)) is disordered. Residues 378–394 (VGEEDEEAAEAEAEAEE) are compositionally biased toward acidic residues. Residues 415 to 433 (AEDKRSQEETPGHRRKEAE) are compositionally biased toward basic and acidic residues. Phosphoserine; by FAM20C is present on Ser420. Position 424 is a phosphothreonine; by FAM20C (Thr424). Residues 434 to 448 (GTEEGGEEEDDEEMD) show a composition bias toward acidic residues. Over residues 487-497 (PPEPVPPPRAA) the composition is skewed to pro residues. Pro577 carries the post-translational modification Proline amide. Basic and acidic residues predominate over residues 577 to 599 (PGREAQARRAQEEAEAEERRLQE).

As to quaternary structure, interacts with HSPA8 on cell membrane. Interacts with C3AR1. Interacts with C1QBP. Post-translationally, multiple peptides are derived from VGF, with activities in synaptic plasticity, antidepression, penile erection, autonomic activation, and increases in energy expenditure. In terms of tissue distribution, central and peripheral nervous systems, synthesized exclusively in neuronal and neuroendocrine cells.

The protein localises to the secreted. It is found in the cytoplasmic vesicle. It localises to the secretory vesicle. Functionally, secreted polyprotein that is packaged and proteolytically processed by prohormone convertases PCSK1 and PCSK2 in a cell-type-specific manner. VGF and peptides derived from its processing play many roles in neurogenesis and neuroplasticity associated with learning, memory, depression and chronic pain. In terms of biological role, plays a role in the control of body fluid homeostasis by regulating vasopressin release. Suppresses presynaptic glutamatergic neurons connected to vasopressin neurons. Its function is as follows. Plays a role in the control of body fluid homeostasis by regulating vasopressin release. Activates GABAergic interneurons which are inhibitory neurons of the nervous system and thereby suppresses presynaptic glutamatergic neurons. Also stimulates feeding behavior in an orexin-dependent manner in the hypothalamus. Functions as a positive regulator for the activation of orexin neurons resulting in elevated gastric acid secretion and gastric emptying. Secreted multifunctional neuropeptide that binds to different cell receptors and thereby plays multiple physiological roles including modulation of energy expenditure, pain, response to stress, gastric regulation, glucose homeostasis as well as lipolysis. Activates the G-protein-coupled receptor C3AR1 via a folding-upon-binding mechanism leading to enhanced lipolysis in adipocytes. Interacts with C1QBP receptor in macrophages and microglia causing increased levels of intracellular calcium and hypersensitivity. Functionally, plays a role in the regulation of memory formation and depression-related behaviors potentially by influencing synaptic plasticity and neurogenesis. Induces acute and transient activation of the NTRK2/TRKB receptor and subsequent CREB phosphorylation. Also induces insulin secretion in insulinoma cells by increasing intracellular calcium mobilization. In terms of biological role, has bactericidal activity against M.luteus, and antifungal activity against P. Pastoris. In Homo sapiens (Human), this protein is Neurosecretory protein VGF (VGF).